A 50-amino-acid chain; its full sequence is Defensin D4 (50 aa).

4 disulfide bridges follow: cysteine 3–cysteine 50, cysteine 14–cysteine 35, cysteine 20–cysteine 44, and cysteine 24–cysteine 46.

As to expression, detected in seeds (at protein level).

It localises to the secreted. In terms of biological role, antimicrobial peptide with antifungal activity. This is Defensin D4 from Nigella sativa (Black cumin).